The sequence spans 598 residues: DNA mismatch repair protein MutL (598 aa).

This sequence belongs to the DNA mismatch repair MutL/HexB family.

Its function is as follows. This protein is involved in the repair of mismatches in DNA. It is required for dam-dependent methyl-directed DNA mismatch repair. May act as a 'molecular matchmaker', a protein that promotes the formation of a stable complex between two or more DNA-binding proteins in an ATP-dependent manner without itself being part of a final effector complex. The protein is DNA mismatch repair protein MutL of Geotalea daltonii (strain DSM 22248 / JCM 15807 / FRC-32) (Geobacter daltonii).